The primary structure comprises 182 residues: Small ribosomal subunit protein uS5 (182 aa).

Positions 16–79 (FVDRLVHINR…ESAKRGMIYV (64 aa)) constitute an S5 DRBM domain.

Belongs to the universal ribosomal protein uS5 family. As to quaternary structure, part of the 30S ribosomal subunit. Contacts proteins S4 and S8.

In terms of biological role, with S4 and S12 plays an important role in translational accuracy. Functionally, located at the back of the 30S subunit body where it stabilizes the conformation of the head with respect to the body. The protein is Small ribosomal subunit protein uS5 of Bartonella henselae (strain ATCC 49882 / DSM 28221 / CCUG 30454 / Houston 1) (Rochalimaea henselae).